Consider the following 171-residue polypeptide: Der GTPase-activating protein YihI (171 aa).

Disordered stretches follow at residues 1 to 99 and 145 to 171; these read MKKP…PQAE and GLSYEDDEDDEEEEKQDDMMRLLKGGN. Basic and acidic residues predominate over residues 20–30; that stretch reads TREELNQEARD. A compositionally biased stretch (low complexity) spans 40-59; that stretch reads HSAGSRANGSSASGSTAQNS. Residues 148–160 show a composition bias toward acidic residues; the sequence is YEDDEDDEEEEKQ.

Belongs to the YihI family. In terms of assembly, interacts with Der.

Its function is as follows. A GTPase-activating protein (GAP) that modifies Der/EngA GTPase function. May play a role in ribosome biogenesis. The chain is Der GTPase-activating protein YihI from Enterobacter sp. (strain 638).